The chain runs to 705 residues: 1,4-alpha-glucan branching enzyme GlgB (705 aa).

The active-site Nucleophile is the aspartate 309. Catalysis depends on glutamate 360, which acts as the Proton donor. A disordered region spans residues 654-705; that stretch reads VQVERAADPRPNEQQRLVAETPAHEGGRSAPADAAESAEQKPDDEQKGGKKA. Residues 691-705 are compositionally biased toward basic and acidic residues; it reads AEQKPDDEQKGGKKA.

Belongs to the glycosyl hydrolase 13 family. GlgB subfamily. As to quaternary structure, monomer.

It catalyses the reaction Transfers a segment of a (1-&gt;4)-alpha-D-glucan chain to a primary hydroxy group in a similar glucan chain.. It functions in the pathway glycan biosynthesis; glycogen biosynthesis. In terms of biological role, catalyzes the formation of the alpha-1,6-glucosidic linkages in glycogen by scission of a 1,4-alpha-linked oligosaccharide from growing alpha-1,4-glucan chains and the subsequent attachment of the oligosaccharide to the alpha-1,6 position. The protein is 1,4-alpha-glucan branching enzyme GlgB of Deinococcus radiodurans (strain ATCC 13939 / DSM 20539 / JCM 16871 / CCUG 27074 / LMG 4051 / NBRC 15346 / NCIMB 9279 / VKM B-1422 / R1).